We begin with the raw amino-acid sequence, 208 residues long: dITP/XTP pyrophosphatase (208 aa).

15–20 (SHNAGK) provides a ligand contact to substrate. Mg(2+) contacts are provided by E47 and D76. D76 functions as the Proton acceptor in the catalytic mechanism. Substrate contacts are provided by residues S77, 157–160 (HGYD), K180, and 185–186 (HR).

The protein belongs to the HAM1 NTPase family. In terms of assembly, homodimer. Requires Mg(2+) as cofactor.

The enzyme catalyses XTP + H2O = XMP + diphosphate + H(+). The catalysed reaction is dITP + H2O = dIMP + diphosphate + H(+). It carries out the reaction ITP + H2O = IMP + diphosphate + H(+). In terms of biological role, pyrophosphatase that catalyzes the hydrolysis of nucleoside triphosphates to their monophosphate derivatives, with a high preference for the non-canonical purine nucleotides XTP (xanthosine triphosphate), dITP (deoxyinosine triphosphate) and ITP. Seems to function as a house-cleaning enzyme that removes non-canonical purine nucleotides from the nucleotide pool, thus preventing their incorporation into DNA/RNA and avoiding chromosomal lesions. The sequence is that of dITP/XTP pyrophosphatase from Gluconobacter oxydans (strain 621H) (Gluconobacter suboxydans).